A 211-amino-acid polypeptide reads, in one-letter code: Urease accessory protein UreG (211 aa).

11–18 provides a ligand contact to GTP; that stretch reads GPVGAGKT.

This sequence belongs to the SIMIBI class G3E GTPase family. UreG subfamily. Homodimer. UreD, UreF and UreG form a complex that acts as a GTP-hydrolysis-dependent molecular chaperone, activating the urease apoprotein by helping to assemble the nickel containing metallocenter of UreC. The UreE protein probably delivers the nickel.

Its subcellular location is the cytoplasm. Facilitates the functional incorporation of the urease nickel metallocenter. This process requires GTP hydrolysis, probably effectuated by UreG. In Actinobacillus pleuropneumoniae serotype 5b (strain L20), this protein is Urease accessory protein UreG.